The primary structure comprises 184 residues: Endothelial cell-specific molecule 1 (184 aa).

Residues 1–19 (MKSVLLLTTLLVPAHLVAA) form the signal peptide. Residues 24 to 102 (YAVDCPQHCD…GEEFGICKDC (79 aa)) enclose the IGFBP N-terminal domain. 6 cysteine pairs are disulfide-bonded: C28/C51, C32/C53, C37/C54, C43/C57, C65/C83, and C77/C99. The O-linked (Xyl...) (chondroitin sulfate) serine glycan is linked to S156.

As to quaternary structure, monomer. In terms of processing, may contain intrachain disulfide bonds. O-glycosylated; contains chondroitin sulfate and dermatan sulfate. In terms of tissue distribution, expressed in lung, on the vascular capillary network within alveolar walls, and also at lower level in kidney.

The protein resides in the secreted. Functionally, involved in angiogenesis; promotes angiogenic sprouting. May have potent implications in lung endothelial cell-leukocyte interactions. In Homo sapiens (Human), this protein is Endothelial cell-specific molecule 1 (ESM1).